The sequence spans 139 residues: MNFKTALICFALLLIGTLCSAYSNQERQRDSRRVAEIMRTSLDDNTKINRIQELLTIYNRMAPSLRPDERARIDRFISRHTEGIIVDGVPSQGGARKIFKKTLSPAAKSVATGFFTELGASLASLFTSWFPTTTTERNH.

The N-terminal stretch at 1 to 21 (MNFKTALICFALLLIGTLCSA) is a signal peptide.

The protein belongs to the Turandot family.

The protein localises to the secreted. In terms of biological role, a humoral factor that may play a role in stress tolerance. This is Protein Turandot B from Drosophila sechellia (Fruit fly).